A 607-amino-acid polypeptide reads, in one-letter code: Autophagy-related protein 16-1 (607 aa).

The interaction with ATG5 stretch occupies residues 13 to 43 (WKRHISEQLRRRDRLQRQAFEEIILQYNKLL). Residues 78-230 (NDNQLQEMAQ…QKELAEAAKE (153 aa)) are a coiled coil. Ser139 carries the post-translational modification Phosphoserine; by CK2. Positions 207–230 (AENEKDSRRRQARLQKELAEAAKE) are WIPI2-binding. The RB1CC1-binding stretch occupies residues 230–242 (EPLPVEQDDDIEV). Ser269 and Ser287 each carry phosphoserine. The Caspase cleavage signature appears at 296-299 (DNVD). WD repeat units follow at residues 320–359 (AHDGEVNAVQFSPGSRLLATGGMDRRVKLWEVFGEKCEFK), 364–403 (GSNAGITSIEFDSAGSYLLAASNDFASRIWTVDDYRLRHT), 406–445 (GHSGKVLSAKFLLDNARIVSGSHDRTLKLWDLRSKVCIKT), 447–484 (FAGSSCNDIVCTEQCVMSGHFDKKIRFWDIRSESIVRE), 486–525 (ELLGKITALDLNPERTELLSCSRDDLLKVIDLRTNAIKQT), 532–573 (KCGS…KVLS), and 575–607 (QHSSSINAVAWSPSGSHVVSVDKGCKAVLWAQY).

This sequence belongs to the WD repeat ATG16 family. Homodimer. Homooligomer. Heterooligomer with ATG16L2. Interacts with WIPI1. Interacts with WIPI2. Interacts with RB1CC1; the interaction is required for ULK1 complex-dependent autophagy. Interacts with ATG5. Part of the minor complex composed of 4 sets of ATG12-ATG5 and ATG16L1 (400 kDa); this complex interacts with ATG3 leading to disruption of ATG7 interaction and promotion of ATG8-like proteins lipidation. Part of the major complex composed of 8 sets of ATG12-ATG5 and ATG16L1 (800 kDa). Interacts with RAB33B (GTP- and GDP-bound forms); the complex consists of a tetramer where two RAB33B molecules bind independently one molecule of the ATG16L1 homodimer; the interaction promotes ATG12-ATG5-ATG16L1 complex recruitment to phagophores. Interacts (via WD repeats) with TMEM59; the interaction mediates unconventional autophagic activity of TMEM59. Interacts with TLR2. Interacts (via WD repeats) with MEFV. Interacts with PPP1CA; the interaction dephosphorylates ATG16L1 causing dissociation of ATG12-ATG5-ATG16L1 complex. Interacts (via N-terminal) with CLTC. Interacts with NOD1. Interacts with NOD2. Interacts with TUFM. Interacts with TRIM16. Interacts (via WD repeats) with SPATA33. Interacts with IRGM. Proteolytic cleavage by activated CASP3 leads to degradation and may regulate autophagy upon cellular stress and apoptotic stimuli. Post-translationally, phosphorylation at Ser-139 promotes association with the ATG12-ATG5 conjugate to form the ATG12-ATG5-ATG16L1 complex.

It is found in the cytoplasm. The protein localises to the preautophagosomal structure membrane. It localises to the endosome membrane. The protein resides in the lysosome membrane. In terms of biological role, plays an essential role in both canonical and non-canonical autophagy: interacts with ATG12-ATG5 to mediate the lipidation to ATG8 family proteins (MAP1LC3A, MAP1LC3B, MAP1LC3C, GABARAPL1, GABARAPL2 and GABARAP). Acts as a molecular hub, coordinating autophagy pathways via distinct domains that support either canonical or non-canonical signaling. During canonical autophagy, interacts with ATG12-ATG5 to mediate the conjugation of phosphatidylethanolamine (PE) to ATG8 proteins, to produce a membrane-bound activated form of ATG8. Thereby, controls the elongation of the nascent autophagosomal membrane. As part of the ATG8 conjugation system with ATG5 and ATG12, required for recruitment of LRRK2 to stressed lysosomes and induction of LRRK2 kinase activity in response to lysosomal stress. Also involved in non-canonical autophagy, a parallel pathway involving conjugation of ATG8 proteins to single membranes at endolysosomal compartments, probably by catalyzing conjugation of phosphatidylserine (PS) to ATG8. Non-canonical autophagy plays a key role in epithelial cells to limit lethal infection by influenza A (IAV) virus. Regulates mitochondrial antiviral signaling (MAVS)-dependent type I interferon (IFN-I) production. Negatively regulates NOD1- and NOD2-driven inflammatory cytokine response. Instead, promotes an autophagy-dependent antibacterial pathway together with NOD1 or NOD2. Plays a role in regulating morphology and function of Paneth cell. The chain is Autophagy-related protein 16-1 from Homo sapiens (Human).